A 214-amino-acid chain; its full sequence is Phosphatidylserine decarboxylase proenzyme (214 aa).

The active-site Schiff-base intermediate with substrate; via pyruvic acid is the Ser183. A Pyruvic acid (Ser); by autocatalysis modification is found at Ser183.

This sequence belongs to the phosphatidylserine decarboxylase family. PSD-A subfamily. Heterodimer of a large membrane-associated beta subunit and a small pyruvoyl-containing alpha subunit. Pyruvate serves as cofactor. Is synthesized initially as an inactive proenzyme. Formation of the active enzyme involves a self-maturation process in which the active site pyruvoyl group is generated from an internal serine residue via an autocatalytic post-translational modification. Two non-identical subunits are generated from the proenzyme in this reaction, and the pyruvate is formed at the N-terminus of the alpha chain, which is derived from the carboxyl end of the proenzyme. The post-translation cleavage follows an unusual pathway, termed non-hydrolytic serinolysis, in which the side chain hydroxyl group of the serine supplies its oxygen atom to form the C-terminus of the beta chain, while the remainder of the serine residue undergoes an oxidative deamination to produce ammonia and the pyruvoyl prosthetic group on the alpha chain.

It localises to the cell membrane. The catalysed reaction is a 1,2-diacyl-sn-glycero-3-phospho-L-serine + H(+) = a 1,2-diacyl-sn-glycero-3-phosphoethanolamine + CO2. It participates in phospholipid metabolism; phosphatidylethanolamine biosynthesis; phosphatidylethanolamine from CDP-diacylglycerol: step 2/2. Its function is as follows. Catalyzes the formation of phosphatidylethanolamine (PtdEtn) from phosphatidylserine (PtdSer). In Chlorobaculum parvum (strain DSM 263 / NCIMB 8327) (Chlorobium vibrioforme subsp. thiosulfatophilum), this protein is Phosphatidylserine decarboxylase proenzyme.